We begin with the raw amino-acid sequence, 353 residues long: Photosystem II D2 protein (353 aa).

An N-acetylthreonine modification is found at Thr2. Thr2 is subject to Phosphothreonine. Residues 41–61 (CAYFALGGWFTGTTFVTSWYT) form a helical membrane-spanning segment. A chlorophyll a-binding site is contributed by His118. Residues 125 to 141 (GFMLRQFELARSVQLRP) form a helical membrane-spanning segment. The pheophytin a site is built by Gln130 and Asn143. A helical transmembrane segment spans residues 153 to 166 (VFVSVFLIYPLGQS). His198 contacts chlorophyll a. Residues 208 to 228 (AALLCAIHGATVENTLFEDGD) traverse the membrane as a helical segment. 2 residues coordinate a plastoquinone: His215 and Phe262. His215 is a Fe cation binding site. Fe cation is bound at residue His269. A helical membrane pass occupies residues 279 to 295 (GLWMSALGVVGLALNLR).

Belongs to the reaction center PufL/M/PsbA/D family. In terms of assembly, PSII is composed of 1 copy each of membrane proteins PsbA, PsbB, PsbC, PsbD, PsbE, PsbF, PsbH, PsbI, PsbJ, PsbK, PsbL, PsbM, PsbT, PsbX, PsbY, PsbZ, Psb30/Ycf12, at least 3 peripheral proteins of the oxygen-evolving complex and a large number of cofactors. It forms dimeric complexes. The cofactor is The D1/D2 heterodimer binds P680, chlorophylls that are the primary electron donor of PSII, and subsequent electron acceptors. It shares a non-heme iron and each subunit binds pheophytin, quinone, additional chlorophylls, carotenoids and lipids. There is also a Cl(-1) ion associated with D1 and D2, which is required for oxygen evolution. The PSII complex binds additional chlorophylls, carotenoids and specific lipids..

The protein resides in the plastid. The protein localises to the chloroplast thylakoid membrane. The enzyme catalyses 2 a plastoquinone + 4 hnu + 2 H2O = 2 a plastoquinol + O2. Photosystem II (PSII) is a light-driven water:plastoquinone oxidoreductase that uses light energy to abstract electrons from H(2)O, generating O(2) and a proton gradient subsequently used for ATP formation. It consists of a core antenna complex that captures photons, and an electron transfer chain that converts photonic excitation into a charge separation. The D1/D2 (PsbA/PsbD) reaction center heterodimer binds P680, the primary electron donor of PSII as well as several subsequent electron acceptors. D2 is needed for assembly of a stable PSII complex. The sequence is that of Photosystem II D2 protein from Amborella trichopoda.